The primary structure comprises 339 residues: MRVYYDRDADLNLIKGKKVAVIGYGSQGHAHALNLKDSGVKDVAIALRKGSASAKKAENAGFKVMEVAEAAKWADVMMMLTPDELQADIYREHLHDNMKQGAALLFAHGLNVHFNLIEPRADLDVLMVAPKGPGHTVRSEYQRGGGVPCLIAIHKDASGNAHDLGLSYASAIGGGRAGIIETTFREECETDLFGEQVVLCGGLVELIKAGFETLVEAGYAPEMAYFECLHEVKLIVDLIYEGGIANMNYSISNTAEYGEYVTGPRIVTPETKAEMKRVLADIQNGIFTRNWMLENKVNQTSFKATRAKLAQHPIEEVGAKLRDMMPWIKKGALVDKSKN.

The 182-residue stretch at 1-182 (MRVYYDRDAD…GGGRAGIIET (182 aa)) folds into the KARI N-terminal Rossmann domain. Residues 24–27 (YGSQ), R48, S51, S53, and 83–86 (DELQ) contribute to the NADP(+) site. The active site involves H108. Residue G134 participates in NADP(+) binding. In terms of domain architecture, KARI C-terminal knotted spans 183 to 328 (TFREECETDL…AKLRDMMPWI (146 aa)). Mg(2+) contacts are provided by D191, E195, E227, and E231. Substrate is bound at residue S252.

This sequence belongs to the ketol-acid reductoisomerase family. The cofactor is Mg(2+).

It carries out the reaction (2R)-2,3-dihydroxy-3-methylbutanoate + NADP(+) = (2S)-2-acetolactate + NADPH + H(+). The catalysed reaction is (2R,3R)-2,3-dihydroxy-3-methylpentanoate + NADP(+) = (S)-2-ethyl-2-hydroxy-3-oxobutanoate + NADPH + H(+). Its pathway is amino-acid biosynthesis; L-isoleucine biosynthesis; L-isoleucine from 2-oxobutanoate: step 2/4. The protein operates within amino-acid biosynthesis; L-valine biosynthesis; L-valine from pyruvate: step 2/4. Involved in the biosynthesis of branched-chain amino acids (BCAA). Catalyzes an alkyl-migration followed by a ketol-acid reduction of (S)-2-acetolactate (S2AL) to yield (R)-2,3-dihydroxy-isovalerate. In the isomerase reaction, S2AL is rearranged via a Mg-dependent methyl migration to produce 3-hydroxy-3-methyl-2-ketobutyrate (HMKB). In the reductase reaction, this 2-ketoacid undergoes a metal-dependent reduction by NADPH to yield (R)-2,3-dihydroxy-isovalerate. The sequence is that of Ketol-acid reductoisomerase (NADP(+)) from Rhodopseudomonas palustris (strain ATCC BAA-98 / CGA009).